Consider the following 225-residue polypeptide: Urease accessory protein UreE (225 aa).

Composition is skewed to basic and acidic residues over residues 189-202 (HSHD…EHEG) and 212-225 (NSHD…HSRR). Residues 189–225 (HSHDFMGHSHEHEGHRHVHNHAGNSHDNEHDEHHSRR) are disordered.

The protein belongs to the UreE family.

The protein localises to the cytoplasm. Functionally, involved in urease metallocenter assembly. Binds nickel. Probably functions as a nickel donor during metallocenter assembly. The chain is Urease accessory protein UreE from Edwardsiella ictaluri.